A 681-amino-acid chain; its full sequence is Sodium-dependent phosphate transporter 1 (681 aa).

6 consecutive transmembrane segments (helical) span residues 25-45, 66-86, 106-126, 162-182, 201-221, and 234-254; these read NLWMLILGFIIAFVLAFSVGA, ACILASIFETVGSALLGAKVS, LMAGSVSAMFGSAVWQLVASF, IVMSWFVSPLLSGIMSGILFF, ALPIFYACTIGINLFSIMYTG, and GTILISVGCAVFCALIVWFFV. Residues 266–295 are disordered; that stretch reads VKSSPSESPLMEKKSNLKEDHEETKMAPGD. Residues Ser-269 and Ser-273 each carry the phosphoserine modification. Residues 275–295 are compositionally biased toward basic and acidic residues; that stretch reads LMEKKSNLKEDHEETKMAPGD. The helical transmembrane segment at 514–534 threads the bilayer; the sequence is VSLLFQFLQILTACFGSFAHG. Residues 553–560 form an a region; that stretch reads KQEASTKA. The next 3 membrane-spanning stretches (helical) occupy residues 561–581, 602–622, and 652–672; these read ATPIWLLLYGGVGICMGLWVW, FSIELASALTVVIASNIGLPI, and IFMAWFVTVPISGVISAAIMA.

It belongs to the inorganic phosphate transporter (PiT) (TC 2.A.20) family. As to expression, ubiquitously expressed.

The protein localises to the cell membrane. It carries out the reaction 2 Na(+)(out) + phosphate(out) = 2 Na(+)(in) + phosphate(in). In terms of biological role, sodium-phosphate symporter which preferentially transports the monovalent form of phosphate with a stoichiometry of two sodium ions per phosphate ion. May play a role in extracellular matrix and cartilage calcification as well as in vascular calcification. Essential for cell proliferation but this function is independent of its phosphate transporter activity. Its function is as follows. (Microbial infection) May function as a retroviral receptor but do not confer infection susceptibility to Gibbon Ape Leukemia Virus (GaLV), Simian sarcoma-associated virus (SSAV) and Feline leukemia virus subgroup B (FeLV-B). This chain is Sodium-dependent phosphate transporter 1 (Slc20a1), found in Mus musculus (Mouse).